Consider the following 692-residue polypeptide: MSGGRFDFDDGGAYCGGWEGGKAHGHGLCTGPKGQGEYSGSWNFGFEVAGVYTWPSGNTFEGYWSQGKRHGLGIETKGRWLYKGEWTHGFKGRYGIRQSTNSGAKYEGTWNNGLQDGYGTETYADGGTYQGQFTNGMRHGYGVRQSVPYGMAVVVRSPLRTSLSSLRSEHSNGTVAPDSPAADGPTLPLPPVPRGGFALSLLATAEAARPPGLFTRGALLGRLRRSESRTSLGSQRSRLSFLKSELSSGASDAASTGSLAEGAEGPDDAAAPFDADIDATTTETYMGEWKNDKRSGFGVSERSSGLRYEGEWLDNLRHGYGRTTLPDGHREEGKYRHNVLVKGTKRRVLPLKSNKVRQKVEHGVEGAQRAAAIARQKAEIAASRTSHAKAKAEAAEQAALAANQESNIARTLAKELAPDFYQPGPEYQKRRLLQEILENSESLLEPRERGPGTGLPERPRESPQLHERETPQPEGGPPSPAGTPPQPKRPRPGSSKDGLLSPGAWNGEPGGEGSRPATPSDGAGRRSPARPASEHMAIEALQPPPAPSREPEVALYRGYHSYAVRTGPPEPPPLEDEPEPEPEVPRSDSEPPSPVSATVQEEESPAPRSRVPAKPATLEPKPIVPKAEPKAKARKTEARGLSKAGAKKKGRKEVAQEAEAEVEVEEVPNTVLICMVILLNIGLAILFVHLLT.

Residues 1-670 (MSGGRFDFDD…EVEVEEVPNT (670 aa)) are Cytoplasmic-facing. MORN repeat units follow at residues 14 to 36 (YCGG…KGQG), 38 to 59 (YSGS…SGNT), 60 to 79 (FEGY…TKGR), 82 to 104 (YKGE…NSGA), 106 to 128 (YEGT…DGGT), and 129 to 151 (YQGQ…PYGM). Phosphoserine is present on residues Ser162 and Ser165. Disordered stretches follow at residues 164–190 (SSLR…LPLP) and 246–273 (LSSG…AAPF). 2 MORN repeats span residues 285–307 (YMGE…SGLR) and 308–330 (YEGE…DGHR). The Bipartite nuclear localization signal signature appears at 345-359 (KRRVLPLKSNKVRQK). A disordered region spans residues 439-661 (NSESLLEPRE…KEVAQEAEAE (223 aa)). Phosphoserine occurs at positions 440, 442, and 462. Residues 457–471 (ERPRESPQLHERETP) show a composition bias toward basic and acidic residues. Thr470 carries the post-translational modification Phosphothreonine. Pro residues predominate over residues 474–487 (EGGPPSPAGTPPQP). Ser479 is subject to Phosphoserine. Phosphothreonine is present on Thr483. A Nuclear localization signal motif is present at residues 488-492 (KRPRP). 2 positions are modified to phosphoserine: Ser527 and Ser533. Residues 573–582 (PLEDEPEPEP) show a composition bias toward acidic residues. Phosphoserine is present on residues Ser589, Ser593, Ser604, and Ser609. A compositionally biased stretch (basic and acidic residues) spans 627 to 640 (AEPKAKARKTEARG). A helical; Anchor for type IV membrane protein membrane pass occupies residues 671 to 691 (VLICMVILLNIGLAILFVHLL).

Belongs to the junctophilin family. Interacts with TRPC3. Interacts with BAG5 and HSPA8; the interaction with HSPA8 is increased in the presence of BAG5. Junctophilin-2 N-terminal fragment: Interacts with MEF2C. Proteolytically cleaved by calpain in response to cardiac stress. The major cleavage site takes place at the C-terminus and leads to the release of the Junctophilin-2 N-terminal fragment chain (JP2NT). Post-translationally, phosphorylation on Ser-165, probably by PKC, affects RYR1-mediated calcium ion release, interaction with TRPC3, and skeletal muscle myotubule development.

The protein resides in the cell membrane. Its subcellular location is the sarcoplasmic reticulum membrane. It localises to the endoplasmic reticulum membrane. The protein localises to the nucleus. In terms of biological role, membrane-binding protein that provides a structural bridge between the plasma membrane and the sarcoplasmic reticulum and is required for normal excitation-contraction coupling in cardiomyocytes. Provides a structural foundation for functional cross-talk between the cell surface and intracellular Ca(2+) release channels by maintaining the 12-15 nm gap between the sarcolemma and the sarcoplasmic reticulum membranes in the cardiac dyads. Necessary for proper intracellular Ca(2+) signaling in cardiac myocytes via its involvement in ryanodine receptor-mediated calcium ion release. Contributes to the construction of skeletal muscle triad junctions. Functionally, transcription repressor required to safeguard against the deleterious effects of cardiac stress. Generated following cleavage of the Junctophilin-2 chain by calpain in response to cardiac stress in cardiomyocytes. Following cleavage and release from the membrane, translocates to the nucleus, binds DNA and represses expression of genes implicated in cell growth and differentiation, hypertrophy, inflammation and fibrosis. Modifies the transcription profile and thereby attenuates pathological remodeling in response to cardiac stress. Probably acts by competing with MEF2 transcription factors and TATA-binding proteins. This Rattus norvegicus (Rat) protein is Junctophilin-2.